The following is a 256-amino-acid chain: Protein YIPF7 (256 aa).

The Cytoplasmic segment spans residues 1–125 (MSNLAQFDSD…VDGSIMNETD (125 aa)). Composition is skewed to polar residues over residues 18–31 (IDNQ…SNAY) and 38–48 (RKQQAGEQPQP). A disordered region spans residues 18–48 (IDNQEQSGNDSNAYGNLYGSRKQQAGEQPQP). The helical transmembrane segment at 126–146 (LTGPILFCVALGATLLLAGKV) threads the bilayer. Gln147 is a topological domain (extracellular). A helical transmembrane segment spans residues 148 to 168 (FGYVYGMSAIGCLVIHALLNL). Topologically, residues 169–172 (MSSS) are cytoplasmic. A helical transmembrane segment spans residues 173-193 (GVSYGCVASVLGYCLLPMVIL). Residues 194-196 (SGC) are Extracellular-facing. The chain crosses the membrane as a helical span at residues 197–217 (AMFFSLQGIFGIMSSLVIIGW). At 218-235 (CSLSASKIFIAALHMEGQ) the chain is on the cytoplasmic side. The chain crosses the membrane as a helical span at residues 236–256 (QLLVAYPCAILYGLFALLTIF).

Belongs to the YIP1 family.

The protein localises to the endoplasmic reticulum membrane. It localises to the golgi apparatus. The protein resides in the cis-Golgi network membrane. Its subcellular location is the trans-Golgi network membrane. The chain is Protein YIPF7 (YIPF7) from Homo sapiens (Human).